Reading from the N-terminus, the 418-residue chain is Hepatic and glial cell adhesion molecule (418 aa).

A signal peptide spans 1–33; sequence MKRERGALSRASRALRLSPFVYLLLIQPVPLEG. The Ig-like V-type domain occupies 34–142; it reads VNITSPVRLI…GEKTINLTVD (109 aa). The Extracellular segment spans residues 34–240; sequence VNITSPVRLI…VKITVYRRSS (207 aa). N-linked (GlcNAc...) asparagine glycans are attached at residues asparagine 35, asparagine 138, asparagine 167, and asparagine 189. The 87-residue stretch at 148 to 234 folds into the Ig-like C2-type domain; that stretch reads PQVLVASTTV…QVRSLPVKIT (87 aa). Residues cysteine 168 and cysteine 217 are joined by a disulfide bond. Residues 241-261 traverse the membrane as a helical segment; the sequence is LYIILSTGGIFLLVTLVTVCA. Residues 262–418 are Cytoplasmic-facing; that stretch reads CWKPSKKSRK…DESGQVEISA (157 aa). The tract at residues 271–418 is disordered; the sequence is KKRKLEKQNS…DESGQVEISA (148 aa). At serine 280 the chain carries Phosphoserine. The segment covering 287–308 has biased composition (basic and acidic residues); sequence NDDRLKSEADTLPRSGEQERKN. Residues serine 321, serine 352, and serine 379 each carry the phosphoserine modification. Residues 341–358 show a composition bias toward low complexity; it reads GYSVSPPVPGRSPGLPIR. Low complexity predominate over residues 385–396; it reads SSPGRSRSSSRS.

Homodimer. Dimer formation occurs predominantly through cis interactions on the cell surface. Part of a complex containing MLC1, TRPV4, AQP4 and ATP1B1. Interacts with CLCN2. In terms of processing, N-glycosylated.

Its subcellular location is the cytoplasm. It is found in the cell membrane. Functionally, involved in regulating cell motility and cell-matrix interactions. May inhibit cell growth through suppression of cell proliferation. In glia, associates and targets CLCN2 at astrocytic processes and myelinated fiber tracts where it may regulate transcellular chloride flux involved in neuron excitability. This chain is Hepatic and glial cell adhesion molecule, found in Mus musculus (Mouse).